We begin with the raw amino-acid sequence, 970 residues long: uncharacterized protein (970 aa).

A helical membrane pass occupies residues 12–32 (VIFFSVFFVIFFLFIESSVGF).

The protein to E.coli YtfN.

The protein localises to the membrane. This is an uncharacterized protein from Buchnera aphidicola subsp. Acyrthosiphon pisum (strain APS) (Acyrthosiphon pisum symbiotic bacterium).